The following is a 159-amino-acid chain: SsrA-binding protein (159 aa).

Residues 131–148 show a composition bias toward basic and acidic residues; it reads YDKRQTLREKQDRREAER. A disordered region spans residues 131–159; sequence YDKRQTLREKQDRREAERTISAIKRKQRA.

The protein belongs to the SmpB family.

It is found in the cytoplasm. In terms of biological role, required for rescue of stalled ribosomes mediated by trans-translation. Binds to transfer-messenger RNA (tmRNA), required for stable association of tmRNA with ribosomes. tmRNA and SmpB together mimic tRNA shape, replacing the anticodon stem-loop with SmpB. tmRNA is encoded by the ssrA gene; the 2 termini fold to resemble tRNA(Ala) and it encodes a 'tag peptide', a short internal open reading frame. During trans-translation Ala-aminoacylated tmRNA acts like a tRNA, entering the A-site of stalled ribosomes, displacing the stalled mRNA. The ribosome then switches to translate the ORF on the tmRNA; the nascent peptide is terminated with the 'tag peptide' encoded by the tmRNA and targeted for degradation. The ribosome is freed to recommence translation, which seems to be the essential function of trans-translation. The sequence is that of SsrA-binding protein from Streptomyces coelicolor (strain ATCC BAA-471 / A3(2) / M145).